Consider the following 178-residue polypeptide: Stage V sporulation protein T (178 aa).

Positions 5-51 (GIVRRIDDLGRVVIPKEIRRTLRIREGDPLEIFVDRDGEVILKKYSP) constitute a SpoVT-AbrB domain. Residues 56 to 178 (GDFAKEYADA…AGFLARQMEQ (123 aa)) are GAF-like.

The protein to B.subtilis AbrB and Abh. Homotetramer. Two monomers dimerize via their N-terminal swapped-hairpin domains. These dimers further associate into tetramers through helical interactions between their C-terminal GAF-like domains.

Its function is as follows. Transcriptional factor that positively regulates or negatively the expression of a large number of forespore-specific sigma G-dependent genes. May provide a mechanism of feedback control that is important for forespore development. SpoVT levels during spore formation have a major impact on the germination and the resistance of the resultant spores. The chain is Stage V sporulation protein T from Bacillus subtilis (strain 168).